A 280-amino-acid polypeptide reads, in one-letter code: Urease accessory protein UreD (280 aa).

Belongs to the UreD family. In terms of assembly, ureD, UreF and UreG form a complex that acts as a GTP-hydrolysis-dependent molecular chaperone, activating the urease apoprotein by helping to assemble the nickel containing metallocenter of UreC. The UreE protein probably delivers the nickel.

It is found in the cytoplasm. Its function is as follows. Required for maturation of urease via the functional incorporation of the urease nickel metallocenter. This chain is Urease accessory protein UreD, found in Staphylococcus saprophyticus subsp. saprophyticus (strain ATCC 15305 / DSM 20229 / NCIMB 8711 / NCTC 7292 / S-41).